The following is a 405-amino-acid chain: Glycosylated lysosomal membrane protein A (405 aa).

Residues 1–25 form the signal peptide; sequence MGCTRGWRLLLLLGLVCVGALQGRG. At 26-365 the chain is on the lumenal side; sequence QEESREVSLQ…YGEPPRDSFS (340 aa). 15 N-linked (GlcNAc...) asparagine glycosylation sites follow: N55, N86, N125, N129, N143, N153, N157, N164, N169, N179, N206, N222, N267, N304, and N331. A helical membrane pass occupies residues 366–386; it reads ILVICIMAVALGTPLLLLIVG. Over 387–405 the chain is Cytoplasmic; that stretch reads TLVVTALRHKVYSNYEPIN. The Lysosomal targeting motif motif lies at 401 to 405; it reads YEPIN.

It belongs to the GLMP family. Interacts (via lumenal domain) with lysosomal protein MFSD1; the interaction starts while both proteins are still in the endoplasmic reticulum and is required for stabilization of MFSD1 in lysosomes but has no direct effect on its targeting to lysosomes or transporter activity.

It localises to the lysosome membrane. Required to protect lysosomal transporter MFSD1 from lysosomal proteolysis and for MFSD1 lysosomal localization. The protein is Glycosylated lysosomal membrane protein A (glmp-a) of Xenopus laevis (African clawed frog).